A 123-amino-acid polypeptide reads, in one-letter code: PTS system glucitol/sorbitol-specific EIIA component (123 aa).

Residues 3 to 116 (VIYQTTITRI…PDDIAPGSVL (114 aa)) enclose the PTS EIIA type-5 domain. Catalysis depends on His43, which acts as the Tele-phosphohistidine intermediate. His43 carries the phosphohistidine; by HPr modification.

It is found in the cytoplasm. In terms of biological role, the phosphoenolpyruvate-dependent sugar phosphotransferase system (sugar PTS), a major carbohydrate active transport system, catalyzes the phosphorylation of incoming sugar substrates concomitantly with their translocation across the cell membrane. The enzyme II complex composed of SrlA, SrlB and SrlE is involved in glucitol/sorbitol transport. It can also use D-mannitol. This Escherichia coli (strain K12) protein is PTS system glucitol/sorbitol-specific EIIA component (srlB).